The primary structure comprises 165 residues: 3-isopropylmalate dehydratase small subunit (165 aa).

Belongs to the LeuD family. LeuD type 2 subfamily. Heterodimer of LeuC and LeuD.

It catalyses the reaction (2R,3S)-3-isopropylmalate = (2S)-2-isopropylmalate. It participates in amino-acid biosynthesis; L-leucine biosynthesis; L-leucine from 3-methyl-2-oxobutanoate: step 2/4. Functionally, catalyzes the isomerization between 2-isopropylmalate and 3-isopropylmalate, via the formation of 2-isopropylmaleate. This is 3-isopropylmalate dehydratase small subunit from Saccharolobus islandicus (strain M.14.25 / Kamchatka #1) (Sulfolobus islandicus).